We begin with the raw amino-acid sequence, 527 residues long: Amine oxidase [flavin-containing] A (527 aa).

Met1 carries the N-acetylmethionine modification. Topologically, residues 1 to 497 (MASQEKASMA…HSFWERNLPS (497 aa)) are cytoplasmic. Ser383 carries the post-translational modification Phosphoserine. Cys406 is subject to S-8alpha-FAD cysteine. Residues 498-518 (VGGLLKIIGFSTSITALWIVV) form a helical; Anchor for type IV membrane protein membrane-spanning segment. Topologically, residues 519-527 (YKFKLLTRS) are mitochondrial intermembrane. The interaction with membrane phospholipid headgroups stretch occupies residues 520–522 (KFK).

It belongs to the flavin monoamine oxidase family. As to quaternary structure, monomer, homo- or heterodimer (containing two subunits of similar size). Each subunit contains a covalently bound flavin. Enzymatically active as monomer. FAD serves as cofactor.

The protein localises to the mitochondrion outer membrane. It carries out the reaction a secondary aliphatic amine + O2 + H2O = a primary amine + an aldehyde + H2O2. It catalyses the reaction a primary methyl amine + O2 + H2O = an aldehyde + H2O2 + NH4(+). The catalysed reaction is (R)-adrenaline + O2 + H2O = (R)-3,4-dihydroxymandelaldehyde + methylamine + H2O2. The enzyme catalyses dopamine + O2 + H2O = 3,4-dihydroxyphenylacetaldehyde + H2O2 + NH4(+). It carries out the reaction tyramine + O2 + H2O = (4-hydroxyphenyl)acetaldehyde + H2O2 + NH4(+). It catalyses the reaction (R)-noradrenaline + O2 + H2O = (R)-3,4-dihydroxymandelaldehyde + H2O2 + NH4(+). The catalysed reaction is serotonin + O2 + H2O = (5-hydroxyindol-3-yl)acetaldehyde + H2O2 + NH4(+). The enzyme catalyses kynuramine + O2 + H2O = 3-(2-aminophenyl)-3-oxopropanal + H2O2 + NH4(+). It carries out the reaction tryptamine + O2 + H2O = indole-3-acetaldehyde + H2O2 + NH4(+). It catalyses the reaction 2-phenylethylamine + O2 + H2O = 2-phenylacetaldehyde + H2O2 + NH4(+). Its function is as follows. Catalyzes the oxidative deamination of primary and some secondary amine such as neurotransmitters, with concomitant reduction of oxygen to hydrogen peroxide and has important functions in the metabolism of neuroactive and vasoactive amines in the central nervous system and peripheral tissues. Preferentially oxidizes serotonin. Also catalyzes the oxidative deamination of kynuramine to 3-(2-aminophenyl)-3-oxopropanal that can spontaneously condense to 4-hydroxyquinoline. This chain is Amine oxidase [flavin-containing] A, found in Equus caballus (Horse).